The following is a 65-amino-acid chain: Large ribosomal subunit protein bL35 (65 aa).

Positions 1–26 are disordered; the sequence is MPKMKTHRGAAKRFRKTGTGKLKRGK.

The protein belongs to the bacterial ribosomal protein bL35 family.

This is Large ribosomal subunit protein bL35 from Clostridium beijerinckii (strain ATCC 51743 / NCIMB 8052) (Clostridium acetobutylicum).